Here is a 255-residue protein sequence, read N- to C-terminus: Hydroxyacylglutathione hydrolase (255 aa).

7 residues coordinate Zn(2+): His56, His58, Asp60, His61, His114, Asp133, and His171.

Belongs to the metallo-beta-lactamase superfamily. Glyoxalase II family. In terms of assembly, monomer. Zn(2+) serves as cofactor.

The catalysed reaction is an S-(2-hydroxyacyl)glutathione + H2O = a 2-hydroxy carboxylate + glutathione + H(+). It participates in secondary metabolite metabolism; methylglyoxal degradation; (R)-lactate from methylglyoxal: step 2/2. Thiolesterase that catalyzes the hydrolysis of S-D-lactoyl-glutathione to form glutathione and D-lactic acid. This is Hydroxyacylglutathione hydrolase from Rhodopseudomonas palustris (strain BisB18).